We begin with the raw amino-acid sequence, 1068 residues long: MFEDKPHAEGAAVVAAAGEALQALCQELNLDEGSAAEALDDFTAIRGNYSLEGEVTHWLACSLYVACRKSIIPTVGKGIMEGNCVSLTRILRSAKLSLIQFFSKMKKWMDMSNLPQEFRERIERLERNFEVSTVIFKKYEPIFLDIFQNPYEEPPKLPRSRKQRRIPCSVKDLFNFCWTLFVYTKGNFRMIGDDLVNSYHLLLCCLDLIFANAIMCPNRQDLLNPSFKGLPSDFHTADFTASEEPPCIIAVLCELHDGLLVEAKGIKEHYFKPYISKLFDRKILKGECLLDLSSFTDNSKAVNKEYEEYVLTVGDFDERIFLGADAEEEIGTPRKFTRDTPLGKLTAQANVEYNLQQHFEKKRSFAPSTPLTGRRYLREKEAVITPVASATQSVSRLQSIVAGLKNAPSDQLINIFESCVRNPVENIMKILKGIGETFCQHYTQSTDEQPGSHIDFAVNRLKLAEILYYKILETVMVQETRRLHGMDMSVLLEQDIFHRSLMACCLEIVLFAYSSPRTFPWIIEVLNLQPFYFYKVIEVVIRSEEGLSRDMVKHLNSIEEQILESLAWSHDSALWEALQVSANKVPTCEEVIFPNNFETGNGGNVQGHLPLMPMSPLMHPRVKEVRTDSGSLRRDMQPLSPISVHERYSSPTAGSAKRRLFGEDPPKEMLMDKIITEGTKLKIAPSSSITAENVSILPGQTLLTMATAPVTGTTGHKVTIPLHGVANDAGEITLIPLSMNTNQESKVKSPVSLTAHSLIGASPKQTNLTKAQEVHSTGINRPKRTGSLALFYRKVYHLASVRLRDLCLKLDVSNELRRKIWTCFEFTLVHCPDLMKDRHLDQLLLCAFYIMAKVTKEERTFQEIMKSYRNQPQANSHVYRSVLLKSIPREVVAYNKNINDDFEMIDCDLEDATKTPDCSSGPVKEERGDLIKFYNTIYVGRVKSFALKYDLANQDHMMDAPPLSPFPHIKQQPGSPRRISQQHSIYISPHKNGSGLTPRSALLYKFNGSPSKSLKDINNMIRQGEQRTKKRVIAIDSDAESPAKRVCQENDDVLLKRLQDVVSERANH.

Thr332 is modified (phosphothreonine; by CDK2). Thr369 carries the phosphothreonine; by CDK4 modification. Thr385 carries the post-translational modification Phosphothreonine; by CDK2. A domain A region spans residues 385–584 (TPVASATQSV…WEALQVSANK (200 aa)). The segment at 385 to 949 (TPVASATQSV…GRVKSFALKY (565 aa)) is pocket; binds T and E1A. The segment at 585 to 780 (VPTCEEVIFP…AQEVHSTGIN (196 aa)) is spacer. Phosphoserine; by CDK2 and CDK4 is present on Ser640. Phosphoserine is present on residues Ser650 and Ser749. Residue Ser762 is modified to Phosphoserine; by CDK2. Residues 781-949 (RPKRTGSLAL…GRVKSFALKY (169 aa)) are domain B. Phosphoserine; by CDK2 and CDK4 is present on residues Ser964 and Ser975. Ser988 bears the Phosphoserine; by CDK2 mark. Residue Thr997 is modified to Phosphothreonine; by CDK2. The residue at position 1009 (Ser1009) is a Phosphoserine; by CDK2. Phosphoserine is present on Ser1041.

The protein belongs to the retinoblastoma protein (RB) family. Component of the DREAM complex (also named LINC complex) at least composed of E2F4, E2F5, LIN9, LIN37, LIN52, LIN54, MYBL1, MYBL2, RBL1, RBL2, RBBP4, TFDP1 and TFDP2. The complex exists in quiescent cells where it represses cell cycle-dependent genes. It dissociates in S phase when LIN9, LIN37, LIN52 and LIN54 form a subcomplex that binds to MYBL2. Interacts with AATF. Interacts with KDM5A. Interacts with KMT5B and KMT5C. Interacts with USP4. Interacts with RBBP9. As to quaternary structure, (Microbial infection) Interacts with SV40 and JC virus large T antigens. Large T antigen, but not E1A, binds only to the unphosphorylated form. In terms of assembly, (Microbial infection) Interacts with JC virus small t antigen. In terms of processing, cell-cycle arrest properties are inactivated by phosphorylation on Thr-332, Ser-640, Ser-964 and Ser-975 by CDK4.

The protein localises to the nucleus. Key regulator of entry into cell division. Directly involved in heterochromatin formation by maintaining overall chromatin structure and, in particular, that of constitutive heterochromatin by stabilizing histone methylation. Recruits and targets histone methyltransferases KMT5B and KMT5C, leading to epigenetic transcriptional repression. Controls histone H4 'Lys-20' trimethylation. Probably acts as a transcription repressor by recruiting chromatin-modifying enzymes to promoters. Potent inhibitor of E2F-mediated trans-activation. May act as a tumor suppressor. This is Retinoblastoma-like protein 1 (RBL1) from Homo sapiens (Human).